The sequence spans 325 residues: Glutarate 2-hydroxylase (325 aa).

H160, D162, and H292 together coordinate Fe cation.

Belongs to the glutarate hydroxylase family. In terms of assembly, homotetramer. It depends on Fe(2+) as a cofactor.

It carries out the reaction glutarate + 2-oxoglutarate + O2 = (S)-2-hydroxyglutarate + succinate + CO2. Its pathway is amino-acid degradation. Functionally, acts as an alpha-ketoglutarate-dependent dioxygenase catalyzing hydroxylation of glutarate (GA) to L-2-hydroxyglutarate (L2HG). Functions in a L-lysine degradation pathway that proceeds via cadaverine, glutarate and L-2-hydroxyglutarate. The protein is Glutarate 2-hydroxylase of Salmonella newport (strain SL254).